We begin with the raw amino-acid sequence, 222 residues long: Triosephosphate isomerase (222 aa).

Asparagine 9 to lysine 11 is a substrate binding site. Histidine 93 functions as the Electrophile in the catalytic mechanism. Glutamate 141 (proton acceptor) is an active-site residue. Residues isoleucine 146, glycine 181, and alanine 202–serine 203 contribute to the substrate site.

This sequence belongs to the triosephosphate isomerase family. Homotetramer; dimer of dimers.

The protein resides in the cytoplasm. It carries out the reaction D-glyceraldehyde 3-phosphate = dihydroxyacetone phosphate. It participates in carbohydrate biosynthesis; gluconeogenesis. It functions in the pathway carbohydrate degradation; glycolysis; D-glyceraldehyde 3-phosphate from glycerone phosphate: step 1/1. In terms of biological role, involved in the gluconeogenesis. Catalyzes stereospecifically the conversion of dihydroxyacetone phosphate (DHAP) to D-glyceraldehyde-3-phosphate (G3P). This chain is Triosephosphate isomerase, found in Methanosarcina acetivorans (strain ATCC 35395 / DSM 2834 / JCM 12185 / C2A).